The following is a 381-amino-acid chain: Penicillin-binding protein 4 (381 aa).

The active-site Acyl-ester intermediate is Ser-60. The helical transmembrane segment at 271–291 (VAGCLDTWSFMATGWGHGWAL) threads the bilayer. 299–308 (GYGHDGASGG) provides a ligand contact to NAD(+). Residues 315–340 (VVPGSGVVAALLTNGGVATSFFTDLF) form a helical membrane-spanning segment.

Belongs to the beta-lactamase family.

It is found in the cell membrane. Its function is as follows. Involved in cell wall biosynthesis and may also act as a sensor of external penicillins. This chain is Penicillin-binding protein 4 (pbp), found in Amycolatopsis lactamdurans (Nocardia lactamdurans).